The primary structure comprises 455 residues: Tubulin alpha-1 chain (455 aa).

Positions 11, 75, 144, 148, 149, 183, 210, and 232 each coordinate GTP. Glu75 provides a ligand contact to Mg(2+). Residue Glu258 is part of the active site.

It belongs to the tubulin family. As to quaternary structure, dimer of alpha and beta chains. A typical microtubule is a hollow water-filled tube with an outer diameter of 25 nm and an inner diameter of 15 nM. Alpha-beta heterodimers associate head-to-tail to form protofilaments running lengthwise along the microtubule wall with the beta-tubulin subunit facing the microtubule plus end conferring a structural polarity. Microtubules usually have 13 protofilaments but different protofilament numbers can be found in some organisms and specialized cells. Mg(2+) is required as a cofactor.

Its subcellular location is the cytoplasm. It is found in the cytoskeleton. The catalysed reaction is GTP + H2O = GDP + phosphate + H(+). In terms of biological role, tubulin is the major constituent of microtubules, a cylinder consisting of laterally associated linear protofilaments composed of alpha- and beta-tubulin heterodimers. Microtubules grow by the addition of GTP-tubulin dimers to the microtubule end, where a stabilizing cap forms. Below the cap, tubulin dimers are in GDP-bound state, owing to GTPase activity of alpha-tubulin. The chain is Tubulin alpha-1 chain (nda2) from Schizosaccharomyces pombe (strain 972 / ATCC 24843) (Fission yeast).